A 166-amino-acid chain; its full sequence is Mitochondrial fission process protein 1 (166 aa).

Helical transmembrane passes span 34–54 (SLVP…YVLA) and 78–98 (ALAV…IPGF). An N6-succinyllysine modification is found at Lys-123. A helical membrane pass occupies residues 129–149 (LGLLAIPVIIHPIDRSVDFLL).

It belongs to the MTFP1 family.

The protein localises to the mitochondrion inner membrane. In terms of biological role, involved in the mitochondrial division probably by regulating membrane fission. Loss-of-function leads to apoptosis. The polypeptide is Mitochondrial fission process protein 1 (Mtfp1) (Mus musculus (Mouse)).